The sequence spans 302 residues: MSQTVSQLTRQPELEILEIKNDSIIFILSNTDISVANALRRVMIAEVPTMCIDLVEFESNNSVLCDEFIAHRLGLIPLVSDNIDKFCYTRDCSCSDRCDQCSVELRLNVKCTENRPRDVTSSDLLSQNSAVIPVSSQVTSSNSEQEIPIVKLRRGQEIKLRAIAKKGVGKEHAKWSPSCVATYQFQPIIVLNQNRIDELTDQQKEEWVGSCPTKVYSYSPHQSTQQVTIEDPLRCVYCLECKKKAESFGKPDLVHLEQKQDKFIFTVESSGALKPEDIVLYAIQIIKRKLTDIQGQMAEGML.

The protein belongs to the archaeal Rpo3/eukaryotic RPB3 RNA polymerase subunit family. Component of the RNA polymerase II (Pol II) complex consisting of 12 subunits.

It is found in the nucleus. Its function is as follows. DNA-dependent RNA polymerase catalyzes the transcription of DNA into RNA using the four ribonucleoside triphosphates as substrates. Component of RNA polymerase II which synthesizes mRNA precursors and many functional non-coding RNAs. Pol II is the central component of the basal RNA polymerase II transcription machinery. It is composed of mobile elements that move relative to each other. Rpb3 is part of the core element with the central large cleft and the clamp element that moves to open and close the cleft. The protein is DNA-directed RNA polymerase II subunit rpb3 (polr2c) of Dictyostelium discoideum (Social amoeba).